Consider the following 196-residue polypeptide: 3-isopropylmalate dehydratase small subunit (196 aa).

Belongs to the LeuD family. LeuD type 1 subfamily. Heterodimer of LeuC and LeuD.

The enzyme catalyses (2R,3S)-3-isopropylmalate = (2S)-2-isopropylmalate. The protein operates within amino-acid biosynthesis; L-leucine biosynthesis; L-leucine from 3-methyl-2-oxobutanoate: step 2/4. In terms of biological role, catalyzes the isomerization between 2-isopropylmalate and 3-isopropylmalate, via the formation of 2-isopropylmaleate. The sequence is that of 3-isopropylmalate dehydratase small subunit from Rhodopirellula baltica (strain DSM 10527 / NCIMB 13988 / SH1).